The primary structure comprises 827 residues: Polyhomeotic-like protein 2 (827 aa).

Disordered stretches follow at residues 1-78 (MEKE…QYLQ), 282-316 (GLGA…SDLT), and 482-545 (QEPT…PPQA). Residues 9–38 (SVASSASVTIPSTTSVSTSTSAGTLSNSSS) are compositionally biased toward low complexity. The segment covering 485–498 (TRTELRQSDKESQV) has biased composition (basic and acidic residues). Polar residues predominate over residues 517–538 (AMTSGSGNNAPTVTGSAPQNGE). An HD1 motif is present at residues 540–570 (KPPPQAVVKPQILTHVIEGFVIQEGAEPFPV). The FCS-type zinc finger occupies 609-643 (NNQPEPVRTCEFCGNVDFAFNFKRSKRFCSTVCAK). 4 residues coordinate Zn(2+): cysteine 618, cysteine 621, cysteine 637, and cysteine 641. Residues 653-730 (MGLFPGKSSP…EPISPLSNSS (78 aa)) are disordered. Residues 661-675 (SPEDTKKPKASDESP) show a composition bias toward basic and acidic residues. Composition is skewed to polar residues over residues 687–696 (PSIQTTTGAS) and 708–717 (GESSQCSDMS). Residues 763–827 (WNVEDVYEFI…FARISMLKDS (65 aa)) form the SAM domain.

Component of a PRC1-like complex. As to expression, isoform 1 expression is stronger at the posterior border than in the anterior region within individual somites; On the contrary, isoform 2 expression is higher at the posterior border.

Its subcellular location is the nucleus. In terms of biological role, component of a Polycomb group (PcG) multiprotein PRC1-like complex, a complex class required to maintain the transcriptionally repressive state of many genes, including Hox genes, throughout development. PcG PRC1 complex acts via chromatin remodeling and modification of histones; it mediates monoubiquitination of histone H2A 'Lys-119', rendering chromatin heritably changed in its expressibility. In Danio rerio (Zebrafish), this protein is Polyhomeotic-like protein 2 (phc2).